The primary structure comprises 251 residues: tRNA pseudouridine synthase A (251 aa).

D52 (nucleophile) is an active-site residue. A substrate-binding site is contributed by Y113.

Belongs to the tRNA pseudouridine synthase TruA family. Homodimer.

It carries out the reaction uridine(38/39/40) in tRNA = pseudouridine(38/39/40) in tRNA. Functionally, formation of pseudouridine at positions 38, 39 and 40 in the anticodon stem and loop of transfer RNAs. This is tRNA pseudouridine synthase A from Brucella anthropi (strain ATCC 49188 / DSM 6882 / CCUG 24695 / JCM 21032 / LMG 3331 / NBRC 15819 / NCTC 12168 / Alc 37) (Ochrobactrum anthropi).